A 382-amino-acid chain; its full sequence is Mannan endo-1,4-beta-mannosidase (382 aa).

The first 19 residues, 1-19, serve as a signal peptide directing secretion; sequence MVKLFSFLLLVWVASPAFS. Substrate is bound by residues W83, N144, 147–151, and N180; that span reads WDESK. E181 (proton donor/acceptor) is an active-site residue. Substrate-binding residues include Q187, Q204, W208, W243, Y282, and H284. Cysteines 195 and 262 form a disulfide. The Nucleophile role is filled by E312. Cysteines 317 and 349 form a disulfide. Residues W341 and D348 each contribute to the substrate site. The interval 346–350 is involved in stabilization of the transition state; it reads GGDCS.

The protein belongs to the glycosyl hydrolase 5 (cellulase A) family. Monomer.

The protein resides in the secreted. It carries out the reaction Random hydrolysis of (1-&gt;4)-beta-D-mannosidic linkages in mannans, galactomannans and glucomannans.. With respect to regulation, activated particularly by Ca(2+) and Zn(2+), and to a lesser extent by Na(+), K(+), Mg(2+) and Cu(2+). Activation effect of the divalent metal ions Ca(2+), Zn(2+), Mg(2+) and Cu(2+) is reduced significantly by the addition of EDTA. Strongly inhibited by Mn(2+), Hg(2+) and Ag(+). Hydrolyzes 1,4-beta linked polysaccharide backbones of mannans. Has high activity toward locust bean gum. Also active toward konjac and beta-1,4-mannan. Hydrolyzes mannotetraose (M4) and mannopentaose (M5) to mannobiose (M2) and mannotriose (M3) with a little production of mannose (M1). Hydrolyzes beta-1,4-mannan to M2, M3 and M4. Hardly hydrolyzes M2 and M3. Does not hydrolyze p-nitrophenyl-beta-D-mannopyranoside, gua-gum, carboxymethyl cellulose, soluble starch or laminarin. The protein is Mannan endo-1,4-beta-mannosidase of Cryptopygus antarcticus (Antarctic springtail).